Reading from the N-terminus, the 497-residue chain is MYYAVDYYADMGQISQDCFAATQTGASDFDMDELDDLDQVTQVIGYHPQFHDHFLATQNFIMKGDGPLPNDYRYYLAIIAAARHQCPYLVKRYEKEFINQGGDSAWLGGLDFIPAKLRAIYDINKILAHRPWLLRKEHIERLTKGKNSWSLSEVVHAMVLLSHFHSLSSFVFSCGLTQKLDGLSSPKLKSPPAAVAALAPTILITPTSPTEPQKGKPVLAEISLNNANPDYDSQTAASSNGGAPPDSANAVADGPDATTLNGYLATAQQLPQQHGISVETLMERMKVLSQKQDECSEAELSSRFQKVEQQTAELAAVTPEAAVGVPTNLSHYVDDANFIYQDFARRGTESINTFRIQDYSWEDHGYSLVDGLYNDVGIFLDAKFRAAYNLTYCTMGGIKNVDTSKFRRAIWNYIQCIYGIRHDDYDYGEVNQLLVRPLKMFIKTACCFPERITTKDYDSVLVELQDSEKVHVNLMIMEARNQAELLYALREIMRYMT.

Phosphoserine occurs at positions 185 and 190. Over residues N226–G241 the composition is skewed to polar residues. The disordered stretch occupies residues N226–P255.

The protein belongs to the sestrin family. Associates with the GATOR2 complex; the interaction is probably direct. Associates with the GATOR1 complex; the interaction is probably indirect and mediated by the GATOR2 complex. In terms of tissue distribution, highly expressed in muscle-enriched tissues (at protein level).

It is found in the nucleus. The protein resides in the cytoplasm. Functions as a negative feedback regulator of mTOR function. This Drosophila melanogaster (Fruit fly) protein is Sestrin homolog.